The sequence spans 460 residues: Elongation factor 1-alpha-B (460 aa).

Gly2 carries the n,N,N-trimethylglycine modification. Lys3 carries the post-translational modification N6,N6-dimethyllysine; alternate. Lys3 is subject to N6-methyllysine; alternate. One can recognise a tr-type G domain in the interval Lys5–Thr240. The tract at residues Gly14 to Ser21 is G1. Gly14–Ser21 contributes to the GTP binding site. N6-methyllysine is present on Lys30. The tract at residues Gly70–Asp74 is G2. Lys79 is subject to N6,N6,N6-trimethyllysine. A G3 region spans residues Asp91–Gly94. GTP-binding positions include Asp91–His95 and Asn153–Asp156. A G4 region spans residues Asn153 to Asp156. The segment at Ser192–Phe194 is G5. Lys316 is modified (N6,N6-dimethyllysine; alternate). Residue Lys316 is modified to N6-methyllysine; alternate. An N6-methyllysine modification is found at Lys390.

It belongs to the TRAFAC class translation factor GTPase superfamily. Classic translation factor GTPase family. EF-Tu/EF-1A subfamily.

It localises to the cytoplasm. Its function is as follows. This protein promotes the GTP-dependent binding of aminoacyl-tRNA to the A-site of ribosomes during protein biosynthesis. This is Elongation factor 1-alpha-B (tef102) from Schizosaccharomyces pombe (strain 972 / ATCC 24843) (Fission yeast).